Reading from the N-terminus, the 750-residue chain is Photosystem I P700 chlorophyll a apoprotein A1 (750 aa).

The next 8 helical transmembrane spans lie at 70–93 (VFSA…FHGA), 156–179 (LYCT…FHYH), 195–219 (LNHH…HVSL), 291–309 (IAHH…GHMY), 346–369 (WHAQ…HHMY), 385–411 (LSLF…IFMV), 433–455 (AIIS…LYIH), and 531–549 (FLVH…LILL). [4Fe-4S] cluster contacts are provided by cysteine 573 and cysteine 582. 2 helical membrane passes run 589–610 (HVFL…HFSW) and 664–686 (LSAY…MFLF). Position 675 (histidine 675) interacts with chlorophyll a'. Chlorophyll a contacts are provided by methionine 683 and tyrosine 691. Tryptophan 692 provides a ligand contact to phylloquinone. The helical transmembrane segment at 724–744 (AVGVTHYLLGGIATTWAFFLA) threads the bilayer.

The protein belongs to the PsaA/PsaB family. In terms of assembly, the PsaA/B heterodimer binds the P700 chlorophyll special pair and subsequent electron acceptors. PSI consists of a core antenna complex that captures photons, and an electron transfer chain that converts photonic excitation into a charge separation. The eukaryotic PSI reaction center is composed of at least 11 subunits. Requires P700 is a chlorophyll a/chlorophyll a' dimer, A0 is one or more chlorophyll a, A1 is one or both phylloquinones and FX is a shared 4Fe-4S iron-sulfur center. as cofactor.

It localises to the plastid. Its subcellular location is the chloroplast thylakoid membrane. The enzyme catalyses reduced [plastocyanin] + hnu + oxidized [2Fe-2S]-[ferredoxin] = oxidized [plastocyanin] + reduced [2Fe-2S]-[ferredoxin]. PsaA and PsaB bind P700, the primary electron donor of photosystem I (PSI), as well as the electron acceptors A0, A1 and FX. PSI is a plastocyanin-ferredoxin oxidoreductase, converting photonic excitation into a charge separation, which transfers an electron from the donor P700 chlorophyll pair to the spectroscopically characterized acceptors A0, A1, FX, FA and FB in turn. Oxidized P700 is reduced on the lumenal side of the thylakoid membrane by plastocyanin. The chain is Photosystem I P700 chlorophyll a apoprotein A1 from Panax ginseng (Korean ginseng).